The chain runs to 358 residues: Phosphoserine aminotransferase (358 aa).

L-glutamate is bound at residue R41. Pyridoxal 5'-phosphate-binding positions include 75–76 (AS), W100, T148, D167, and Q190. K191 carries the post-translational modification N6-(pyridoxal phosphate)lysine. 233–234 (NT) lines the pyridoxal 5'-phosphate pocket.

The protein belongs to the class-V pyridoxal-phosphate-dependent aminotransferase family. SerC subfamily. As to quaternary structure, homodimer. The cofactor is pyridoxal 5'-phosphate.

It localises to the cytoplasm. The catalysed reaction is O-phospho-L-serine + 2-oxoglutarate = 3-phosphooxypyruvate + L-glutamate. The enzyme catalyses 4-(phosphooxy)-L-threonine + 2-oxoglutarate = (R)-3-hydroxy-2-oxo-4-phosphooxybutanoate + L-glutamate. It participates in amino-acid biosynthesis; L-serine biosynthesis; L-serine from 3-phospho-D-glycerate: step 2/3. It functions in the pathway cofactor biosynthesis; pyridoxine 5'-phosphate biosynthesis; pyridoxine 5'-phosphate from D-erythrose 4-phosphate: step 3/5. Its function is as follows. Catalyzes the reversible conversion of 3-phosphohydroxypyruvate to phosphoserine and of 3-hydroxy-2-oxo-4-phosphonooxybutanoate to phosphohydroxythreonine. This Campylobacter jejuni (strain RM1221) protein is Phosphoserine aminotransferase.